We begin with the raw amino-acid sequence, 137 residues long: Cytochrome c-type biogenesis protein CcmE (137 aa).

Topologically, residues 1–8 are cytoplasmic; that stretch reads MQKGAKNR. The helical; Signal-anchor for type II membrane protein transmembrane segment at 9-29 threads the bilayer; sequence LITIIICFCSAVIGVSIILYN. Over 30–137 the chain is Periplasmic; that stretch reads LEKSIVFFVP…NTVIPAKAGI (108 aa). Heme is bound by residues His120 and Tyr124.

The protein belongs to the CcmE/CycJ family.

The protein localises to the cell inner membrane. Functionally, heme chaperone required for the biogenesis of c-type cytochromes. Transiently binds heme delivered by CcmC and transfers the heme to apo-cytochromes in a process facilitated by CcmF and CcmH. This is Cytochrome c-type biogenesis protein CcmE from Rickettsia bellii (strain OSU 85-389).